The following is a 229-amino-acid chain: DNA mismatch repair protein MutH (229 aa).

The protein belongs to the MutH family.

It localises to the cytoplasm. Its function is as follows. Sequence-specific endonuclease that cleaves unmethylated GATC sequences. It is involved in DNA mismatch repair. The sequence is that of DNA mismatch repair protein MutH from Shigella flexneri serotype 5b (strain 8401).